The sequence spans 73 residues: Ubiquitin-like modifier HUB1 (73 aa).

A Ubiquitin-like domain is found at 1–73 (MIEVVVNDRL…DQTNLELYYL (73 aa)).

In terms of biological role, forms conjugate with SPH1 and HBT1. Involved in morphogenesis. This chain is Ubiquitin-like modifier HUB1 (HUB1), found in Saccharomyces cerevisiae (strain ATCC 204508 / S288c) (Baker's yeast).